The primary structure comprises 320 residues: Methionyl-tRNA formyltransferase (320 aa).

112–115 lines the (6S)-5,6,7,8-tetrahydrofolate pocket; that stretch reads SILP.

It belongs to the Fmt family.

It catalyses the reaction L-methionyl-tRNA(fMet) + (6R)-10-formyltetrahydrofolate = N-formyl-L-methionyl-tRNA(fMet) + (6S)-5,6,7,8-tetrahydrofolate + H(+). Attaches a formyl group to the free amino group of methionyl-tRNA(fMet). The formyl group appears to play a dual role in the initiator identity of N-formylmethionyl-tRNA by promoting its recognition by IF2 and preventing the misappropriation of this tRNA by the elongation apparatus. The sequence is that of Methionyl-tRNA formyltransferase from Shewanella woodyi (strain ATCC 51908 / MS32).